A 549-amino-acid polypeptide reads, in one-letter code: Neurofilament light polypeptide (549 aa).

At serine 2 the chain carries N-acetylserine. Positions 2–92 (SSFYSEPYYS…KSIRTQEKAQ (91 aa)) are head. Threonine 21 is a glycosylation site (O-linked (GlcNAc) threonine). Position 23 is an asymmetric dimethylarginine; alternate (arginine 23). Position 23 is an omega-N-methylarginine; alternate (arginine 23). O-linked (GlcNAc) serine glycosylation occurs at serine 27. Position 30 is an omega-N-methylarginine (arginine 30). At tyrosine 43 the chain carries Phosphotyrosine. Residues serine 56, serine 66, and serine 102 each carry the phosphoserine modification. Positions 89 to 400 (EKAQLQDLND…KLLEGEETRL (312 aa)) constitute an IF rod domain. The interval 93–124 (LQDLNDRFASFIERVHELEQQNKVLEAQLLVL) is coil 1A. Positions 125 to 137 (RQKHSEPSRFRAL) are linker 1. The segment at 138-233 (YEQEIRDLRL…KVHEEEIAEL (96 aa)) is coil 1B. The interval 234 to 252 (QAQIQYAQISVEMDVSSKP) is linker 12. Residues 253–271 (DLSAALKDIRAQYEKLAAK) form a coil 2A region. Residues 272–280 (NMQNAEEWF) form a linker 2 region. A coil 2B region spans residues 281 to 396 (KSRFTVLTES…AAYRKLLEGE (116 aa)). An epitope; recognized by IF-specific monoclonal antibody region spans residues 381–391 (ALDIEIAAYRK). Positions 397-443 (ETRLSFTSVGSLTTGYSQSSQVFGRSAYGGLQTSSYLMSTRSFPSYY) are tail, subdomain A. The tract at residues 397–549 (ETRLSFTSVG…GEEQATKKKD (153 aa)) is tail. The tract at residues 444–549 (TSHVQEEQIE…GEEQATKKKD (106 aa)) is tail, subdomain B (acidic). Positions 462–549 (KAEEAKDEPP…GEEQATKKKD (88 aa)) are disordered. The segment covering 471–534 (PSEGEAEEEG…ETKEAEEEEK (64 aa)) has biased composition (acidic residues). A Phosphoserine modification is found at serine 472. Threonine 526 carries the phosphothreonine modification. Positions 535–549 (KDEGAGEEQATKKKD) are enriched in basic and acidic residues.

The protein belongs to the intermediate filament family. As to quaternary structure, forms homodimers (in vitro). Forms heterodimers with NEFH or NEFM; which can further hetero-oligomerize (in vitro). Forms heterodimers with INA (in vitro). Interacts with ARHGEF28. Interacts with TRIM2. Post-translationally, O-glycosylated. Phosphorylated in the head and rod regions by the PKC kinase PKN1, leading to the inhibition of polymerization. In terms of processing, ubiquitinated in the presence of TRIM2 and UBE2D1.

Its subcellular location is the cell projection. The protein localises to the axon. It localises to the cytoplasm. The protein resides in the cytoskeleton. Its function is as follows. Neurofilaments usually contain three intermediate filament proteins: NEFL, NEFM, and NEFH which are involved in the maintenance of neuronal caliber. May additionally cooperate with the neuronal intermediate filament proteins PRPH and INA to form neuronal filamentous networks. The sequence is that of Neurofilament light polypeptide (NEFL) from Sus scrofa (Pig).